A 171-amino-acid polypeptide reads, in one-letter code: Small ribosomal subunit protein bS16 (171 aa).

The segment at 114-171 is disordered; it reads EGGPTTEAAKPKKKAATSGAKKAAKAAEPEAAASEAAEPEAAAAPAEGGEQAESSAES. A compositionally biased stretch (low complexity) spans 142-171; sequence PEAAASEAAEPEAAAAPAEGGEQAESSAES.

Belongs to the bacterial ribosomal protein bS16 family.

This chain is Small ribosomal subunit protein bS16, found in Mycolicibacterium paratuberculosis (strain ATCC BAA-968 / K-10) (Mycobacterium paratuberculosis).